A 205-amino-acid polypeptide reads, in one-letter code: Protease (205 aa).

Active-site residues include histidine 54, aspartate 71, and cysteine 120.

It belongs to the peptidase C5 family. In terms of assembly, interacts with protease cofactor pVI-C; this interaction is necessary for protease activation.

It localises to the virion. The protein resides in the host nucleus. The enzyme catalyses Cleaves proteins of the adenovirus and its host cell at two consensus sites: -Yaa-Xaa-Gly-Gly-|-Xaa- and -Yaa-Xaa-Gly-Xaa-|-Gly- (in which Yaa is Met, Ile or Leu, and Xaa is any amino acid).. Its activity is regulated as follows. Requires DNA and protease cofactor for maximal activation. Inside nascent virions, becomes partially activated by binding to the viral DNA, allowing it to cleave the cofactor that binds to the protease and fully activates it. Actin, like the viral protease cofactor, seems to act as a cofactor in the cleavage of cytokeratin 18 and of actin itself. Functionally, cleaves viral precursor proteins (pTP, pIIIa, pVI, pVII, pVIII, and pX) inside newly assembled particles giving rise to mature virions. Protease complexed to its cofactor slides along the viral DNA to specifically locate and cleave the viral precursors. Mature virions have a weakened organization compared to the unmature virions, thereby facilitating subsequent uncoating. Without maturation, the particle lacks infectivity and is unable to uncoat. Late in adenovirus infection, in the cytoplasm, may participate in the cytoskeleton destruction. Cleaves host cell cytoskeletal keratins K7 and K18. This is Protease from Bos taurus (Bovine).